A 322-amino-acid chain; its full sequence is Undecaprenyl-phosphate 4-deoxy-4-formamido-L-arabinose transferase (322 aa).

At Met1–Met235 the chain is on the cytoplasmic side. A helical membrane pass occupies residues Leu236–Ile256. The Periplasmic segment spans residues Leu257 to Gly269. Residues Val270–Leu290 traverse the membrane as a helical segment. Topologically, residues Leu291–Glu322 are cytoplasmic.

This sequence belongs to the glycosyltransferase 2 family.

The protein localises to the cell inner membrane. It catalyses the reaction UDP-4-deoxy-4-formamido-beta-L-arabinose + di-trans,octa-cis-undecaprenyl phosphate = 4-deoxy-4-formamido-alpha-L-arabinopyranosyl di-trans,octa-cis-undecaprenyl phosphate + UDP. Its pathway is glycolipid biosynthesis; 4-amino-4-deoxy-alpha-L-arabinose undecaprenyl phosphate biosynthesis; 4-amino-4-deoxy-alpha-L-arabinose undecaprenyl phosphate from UDP-4-deoxy-4-formamido-beta-L-arabinose and undecaprenyl phosphate: step 1/2. It participates in bacterial outer membrane biogenesis; lipopolysaccharide biosynthesis. In terms of biological role, catalyzes the transfer of 4-deoxy-4-formamido-L-arabinose from UDP to undecaprenyl phosphate. The modified arabinose is attached to lipid A and is required for resistance to polymyxin and cationic antimicrobial peptides. In Shigella sonnei (strain Ss046), this protein is Undecaprenyl-phosphate 4-deoxy-4-formamido-L-arabinose transferase.